A 170-amino-acid polypeptide reads, in one-letter code: Ribosome maturation factor RimM (170 aa).

In terms of domain architecture, PRC barrel spans 97-170 (HPDEYYWVDL…RIVVDWDPEF (74 aa)).

This sequence belongs to the RimM family. In terms of assembly, binds ribosomal protein uS19.

The protein resides in the cytoplasm. In terms of biological role, an accessory protein needed during the final step in the assembly of 30S ribosomal subunit, possibly for assembly of the head region. Essential for efficient processing of 16S rRNA. May be needed both before and after RbfA during the maturation of 16S rRNA. It has affinity for free ribosomal 30S subunits but not for 70S ribosomes. This chain is Ribosome maturation factor RimM, found in Xylella fastidiosa (strain M23).